The sequence spans 2059 residues: Non-reducing polyketide synthase stmB (2059 aa).

The region spanning 7 to 243 (LLFGDQTVEL…LKLAAYGAVH (237 aa)) is the Starter acyltransferase (SAT) domain. In terms of domain architecture, Ketosynthase family 3 (KS3) spans 366-796 (SNSIAIVGMA…GGNSCLILEE (431 aa)). Active-site for beta-ketoacyl synthase activity residues include Cys-538, His-673, and His-713. The Malonyl-CoA:ACP transacylase (MAT) domain occupies 895-1185 (WVFSGQGSQY…CGSMVKATLG (291 aa)). The segment at 1273–1413 (LHFVKKETVT…SASEWTDEWS (141 aa)) is N-terminal hotdog fold. Residues 1273-1581 (LHFVKKETVT…FQRMPRMVLH (309 aa)) enclose the PKS/mFAS DH domain. His-1306 functions as the Proton acceptor; for dehydratase activity in the catalytic mechanism. The C-terminal hotdog fold stretch occupies residues 1435–1581 (GDHLRRPVVY…FQRMPRMVLH (147 aa)). Asp-1495 serves as the catalytic Proton donor; for dehydratase activity. In terms of domain architecture, Carrier spans 1619–1696 (PPKHDLADQL…DARRALGGDE (78 aa)). An O-(pantetheine 4'-phosphoryl)serine modification is found at Ser-1656. The disordered stretch occupies residues 1693 to 1727 (GGDETASESENDAEGDAPSDGGSPSGSWTPISPPE). Positions 1697 to 1709 (TASESENDAEGDA) are enriched in acidic residues. The span at 1710 to 1719 (PSDGGSPSGS) shows a compositional bias: low complexity. Positions 1778 to 2059 (AVEYKSNVVL…LGKLLQEAVA (282 aa)) are thioesterase (TE) domain.

Pantetheine 4'-phosphate serves as cofactor.

It functions in the pathway mycotoxin biosynthesis. In terms of biological role, non-reducing polyketide synthase; part of the gene cluster that mediates the biosynthesis of stromemycin, a depside C-glucoside with two unsaturated C9 side chains belonging to aromatic polyketide glycosides. The HR-PKS stmA and the NR-PKS stmB act as scaffold-generating enzymes responsible for the biosynthesis of the polyketide skeleton bininalkenylresorcylic acid. StmA condenses on acetyl-CoA starter unit with 4 malonyl-CoA units and the stmB uses 3 more malonyl-CoA units and catalyzes the depside bond formation. The glycoytransferase stmC then acts as the tailoring enzyme responsible for 3-C-glucosylation of bininalkenylresorcylic acid to yield stromemycin. The chain is Non-reducing polyketide synthase stmB from Aspergillus ustus.